We begin with the raw amino-acid sequence, 842 residues long: MVAFTVDQIRSLMDKVTNVRNMSVIAHVDHGKSTLTDSLVQRAGIISAAKAGEARFTDTRKDEQERGITIKSTAISLFSEMSDDDVKDIKQKTDGNAFLINLIDSPGHVDFSSEVTAALRVTDGALVVVDTVEGVCVQTETVLRQSLAERIKPVVVINKVDRALLELQVSKEDLYQSFSRTVESVNVIISTYADEVLGDVQVYPQRGTVAFGSGLHGWAFTVRQFANRYSKKFGVDREKMMDRLWGDSYFNPKTKKWTNKERDADGKPLERAFNMFVLDPIFRLFAAIMNFKKEEIPVLLEKLEINLKGDEKELEGKNLLKVVMRKFLPAADALLEMIILHLPSPVTAQNYRAEQLYEGPSDDPACIAIKNCDPKSDLMLYVSKMVPTSDKGRFYAFGRVFAGTVKSGQKVRIQGPNFIPGKKEDLFIKAIQRAVLMMGRFVEPIDDCPAGNIIGLVGIDQFLLKTGTLTTFEGAHNMKVMKFSVSPVVQVAVEVKNANDLPKLVEGLKRLSKSDPCVLVSMSESGEHIVAGTGELHLEICLQDLENDHAGIPLKISPPVVAYRETVEGESSQTALSKSPNKHNRIYLKAQPIDEEVSLAIEGGKINPRDDFKARARIMADEFGWDVTDARKIWCFGPDGNGPNLVVDQTKAVQYLNEIKDSVVAAFQWATKEGPIFGEQMRSVRVNILDVTLHADAIHRGGGQIIPTMRRATYAGFLLAEPKIQEPVFLVEIQCPEQAIGGIYSVLNKKRGQVVSEEQRPGTPLFTVKAYLPINESFGFTGELRQATGGQAFPQMVFDHWATLGTDPLDPSTKAGEIVLAARKRQGMKEEVPGWQEYYDKL.

One can recognise a tr-type G domain in the interval 17–253; it reads TNVRNMSVIA…LWGDSYFNPK (237 aa). Residues 26–33, 158–161, and 213–215 each bind GTP; these read AHVDHGKS, NKVD, and SGL. A Diphthamide modification is found at His-699.

Belongs to the TRAFAC class translation factor GTPase superfamily. Classic translation factor GTPase family. EF-G/EF-2 subfamily.

The protein resides in the cytoplasm. It catalyses the reaction GTP + H2O = GDP + phosphate + H(+). In terms of biological role, catalyzes the GTP-dependent ribosomal translocation step during translation elongation. During this step, the ribosome changes from the pre-translocational (PRE) to the post-translocational (POST) state as the newly formed A-site-bound peptidyl-tRNA and P-site-bound deacylated tRNA move to the P and E sites, respectively. Catalyzes the coordinated movement of the two tRNA molecules, the mRNA and conformational changes in the ribosome. This Kluyveromyces lactis (strain ATCC 8585 / CBS 2359 / DSM 70799 / NBRC 1267 / NRRL Y-1140 / WM37) (Yeast) protein is Elongation factor 2 (EFT1).